A 356-amino-acid polypeptide reads, in one-letter code: Holliday junction branch migration complex subunit RuvB (356 aa).

Positions 4-192 (DDTTDATADE…FGFTAHMEFY (189 aa)) are large ATPase domain (RuvB-L). ATP-binding positions include Leu31, Arg32, Gly73, Lys76, Thr77, Thr78, 139 to 141 (EDF), Arg182, Tyr192, and Arg229. Thr77 serves as a coordination point for Mg(2+). The small ATPAse domain (RuvB-S) stretch occupies residues 193–263 (EPHELERVIH…IAAAALKVYE (71 aa)). The head domain (RuvB-H) stretch occupies residues 266-356 (ARGLDRLDRG…GNGQGDLFGA (91 aa)). Residues Arg302, Arg321, and Arg326 each coordinate DNA.

It belongs to the RuvB family. As to quaternary structure, homohexamer. Forms an RuvA(8)-RuvB(12)-Holliday junction (HJ) complex. HJ DNA is sandwiched between 2 RuvA tetramers; dsDNA enters through RuvA and exits via RuvB. An RuvB hexamer assembles on each DNA strand where it exits the tetramer. Each RuvB hexamer is contacted by two RuvA subunits (via domain III) on 2 adjacent RuvB subunits; this complex drives branch migration. In the full resolvosome a probable DNA-RuvA(4)-RuvB(12)-RuvC(2) complex forms which resolves the HJ.

It is found in the cytoplasm. The catalysed reaction is ATP + H2O = ADP + phosphate + H(+). The RuvA-RuvB-RuvC complex processes Holliday junction (HJ) DNA during genetic recombination and DNA repair, while the RuvA-RuvB complex plays an important role in the rescue of blocked DNA replication forks via replication fork reversal (RFR). RuvA specifically binds to HJ cruciform DNA, conferring on it an open structure. The RuvB hexamer acts as an ATP-dependent pump, pulling dsDNA into and through the RuvAB complex. RuvB forms 2 homohexamers on either side of HJ DNA bound by 1 or 2 RuvA tetramers; 4 subunits per hexamer contact DNA at a time. Coordinated motions by a converter formed by DNA-disengaged RuvB subunits stimulates ATP hydrolysis and nucleotide exchange. Immobilization of the converter enables RuvB to convert the ATP-contained energy into a lever motion, pulling 2 nucleotides of DNA out of the RuvA tetramer per ATP hydrolyzed, thus driving DNA branch migration. The RuvB motors rotate together with the DNA substrate, which together with the progressing nucleotide cycle form the mechanistic basis for DNA recombination by continuous HJ branch migration. Branch migration allows RuvC to scan DNA until it finds its consensus sequence, where it cleaves and resolves cruciform DNA. This is Holliday junction branch migration complex subunit RuvB from Streptomyces avermitilis (strain ATCC 31267 / DSM 46492 / JCM 5070 / NBRC 14893 / NCIMB 12804 / NRRL 8165 / MA-4680).